The chain runs to 442 residues: Protein UNUSUAL FLORAL ORGANS (442 aa).

Residues 1–85 are interaction with SKP1A; sequence MDSTVFINNP…RFYSLLFSNT (85 aa). Residues 44 to 90 enclose the F-box domain; that stretch reads GRIWSKLPPPLLDRVIAFLPPPAFFRTRCVCKRFYSLLFSNTFLETY.

In terms of assembly, part of a putative SCF (ASK/Cullin/F-box) ubiquitin ligase complex. Interacts with SKP1A/ASK1, SKP1B/ASK2 and ASK11.

It is found in the nucleus. It participates in protein modification; protein ubiquitination. In terms of biological role, component of SCF(ASK-cullin-F-box) E3 ubiquitin ligase complexes, which may mediate the ubiquitination and subsequent proteasomal degradation of target proteins. Considered as a meristem identity factor required for normal growth of the young floral meristem. Acts together with LEAFY to positively regulate the B class floral homeotic genes APETALA3 and PISTILLATA. In this way, operates as a region-specific regulator for petal and stamen development. Alternatively, may play a role as a negative regulator of the C class floral homeotic genes. Interacts together with the SKP1-like protein ASK1 to form a ubiquitin E3 ligase complex and could indirectly promote the ubiquitination and degradation of specific proteins controlling the floral primordia development like repressors of B class floral homeotic genes. The polypeptide is Protein UNUSUAL FLORAL ORGANS (UFO) (Arabidopsis thaliana (Mouse-ear cress)).